The sequence spans 250 residues: Coproheme decarboxylase (250 aa).

Fe-coproporphyrin III-binding positions include Arg131, 145–149 (YPMNK), His172, and Gln185. Residue Tyr145 is part of the active site.

It belongs to the ChdC family. Type 1 subfamily. Fe-coproporphyrin III is required as a cofactor.

It catalyses the reaction Fe-coproporphyrin III + 2 H2O2 + 2 H(+) = heme b + 2 CO2 + 4 H2O. The catalysed reaction is Fe-coproporphyrin III + H2O2 + H(+) = harderoheme III + CO2 + 2 H2O. It carries out the reaction harderoheme III + H2O2 + H(+) = heme b + CO2 + 2 H2O. It functions in the pathway porphyrin-containing compound metabolism; protoheme biosynthesis. Involved in coproporphyrin-dependent heme b biosynthesis. Catalyzes the decarboxylation of Fe-coproporphyrin III (coproheme) to heme b (protoheme IX), the last step of the pathway. The reaction occurs in a stepwise manner with a three-propionate intermediate. The polypeptide is Coproheme decarboxylase (Staphylococcus aureus (strain MRSA252)).